The chain runs to 530 residues: Glucose-6-phosphate 1-dehydrogenase (530 aa).

Residues 53–60 (GASGDLAK), arginine 87, tyrosine 162, and lysine 186 contribute to the NADP(+) site. D-glucose 6-phosphate-binding positions include lysine 186, 216 to 220 (HYLGK), glutamate 254, and aspartate 273. Histidine 278 serves as the catalytic Proton acceptor. Position 372 (arginine 372) interacts with NADP(+). Positions 375 and 380 each coordinate D-glucose 6-phosphate. The NADP(+) site is built by lysine 381, arginine 385, and arginine 408. Glutamine 410 contacts D-glucose 6-phosphate. Residues 416-418 (YAK), 436-438 (DLT), arginine 502, tyrosine 518, and tryptophan 524 each bind NADP(+).

Belongs to the glucose-6-phosphate dehydrogenase family.

It localises to the cytoplasm. The protein resides in the cytosol. The enzyme catalyses D-glucose 6-phosphate + NADP(+) = 6-phospho-D-glucono-1,5-lactone + NADPH + H(+). Its pathway is carbohydrate degradation; pentose phosphate pathway; D-ribulose 5-phosphate from D-glucose 6-phosphate (oxidative stage): step 1/3. Cytosolic glucose-6-phosphate dehydrogenase that catalyzes the first and rate-limiting step of the oxidative branch within the pentose phosphate pathway/shunt, an alternative route to glycolysis for the dissimilation of carbohydrates and a major source of reducing power and metabolic intermediates for fatty acid and nucleic acid biosynthetic processes. The sequence is that of Glucose-6-phosphate 1-dehydrogenase (g6pd) from Takifugu rubripes (Japanese pufferfish).